We begin with the raw amino-acid sequence, 275 residues long: Nitrogenase iron protein 1 (275 aa).

9–16 serves as a coordination point for ATP; the sequence is GKGGIGKS. Cys-97 contacts [4Fe-4S] cluster. ADP-ribosylarginine; by dinitrogenase reductase ADP-ribosyltransferase is present on Arg-100. Cys-132 is a binding site for [4Fe-4S] cluster.

This sequence belongs to the NifH/BchL/ChlL family. Homodimer. [4Fe-4S] cluster is required as a cofactor. The reversible ADP-ribosylation of Arg-100 inactivates the nitrogenase reductase and regulates nitrogenase activity.

The catalysed reaction is N2 + 8 reduced [2Fe-2S]-[ferredoxin] + 16 ATP + 16 H2O = H2 + 8 oxidized [2Fe-2S]-[ferredoxin] + 2 NH4(+) + 16 ADP + 16 phosphate + 6 H(+). Functionally, the key enzymatic reactions in nitrogen fixation are catalyzed by the nitrogenase complex, which has 2 components: the iron protein and the molybdenum-iron protein. The polypeptide is Nitrogenase iron protein 1 (nifH1) (Methanothermobacter thermautotrophicus (strain ATCC 29096 / DSM 1053 / JCM 10044 / NBRC 100330 / Delta H) (Methanobacterium thermoautotrophicum)).